A 157-amino-acid chain; its full sequence is MEALRRAHEATLRLLLCRPWASGAASRPKPRASEVLTQHLLQRRLPHWTSFCVPYSAVHNDQFGLSHFNWPVLGANYHVLRTGCFPFIKYHCSKAPWQDLAPQDRFFTALKVINLGIPTLLYGLGSWLFARVTETVHTSYGPITIYFLNKEDEGAMY.

Residues 1–23 (MEALRRAHEATLRLLLCRPWASG) form the signal peptide.

Its subcellular location is the secreted. This is an uncharacterized protein from Mus musculus (Mouse).